The sequence spans 428 residues: Histidine--tRNA ligase (428 aa).

This sequence belongs to the class-II aminoacyl-tRNA synthetase family. In terms of assembly, homodimer.

It is found in the cytoplasm. It carries out the reaction tRNA(His) + L-histidine + ATP = L-histidyl-tRNA(His) + AMP + diphosphate + H(+). This is Histidine--tRNA ligase from Lactobacillus delbrueckii subsp. bulgaricus (strain ATCC 11842 / DSM 20081 / BCRC 10696 / JCM 1002 / NBRC 13953 / NCIMB 11778 / NCTC 12712 / WDCM 00102 / Lb 14).